We begin with the raw amino-acid sequence, 198 residues long: Small ribosomal subunit protein eS1 (198 aa).

Belongs to the eukaryotic ribosomal protein eS1 family.

The sequence is that of Small ribosomal subunit protein eS1 from Nanoarchaeum equitans (strain Kin4-M).